We begin with the raw amino-acid sequence, 179 residues long: Outer-membrane lipoprotein carrier protein (179 aa).

Positions 1–22 are cleaved as a signal peptide; the sequence is MEVLRRYVLVFTSLCMTLFAWG.

Belongs to the LolA family. Monomer.

The protein localises to the periplasm. In terms of biological role, participates in the translocation of lipoproteins from the inner membrane to the outer membrane. Only forms a complex with a lipoprotein if the residue after the N-terminal Cys is not an aspartate (The Asp acts as a targeting signal to indicate that the lipoprotein should stay in the inner membrane). The sequence is that of Outer-membrane lipoprotein carrier protein from Helicobacter hepaticus (strain ATCC 51449 / 3B1).